The primary structure comprises 665 residues: Protein-arginine deiminase type-2 (665 aa).

The Ca(2+) site is built by Asp123, Asp125, Asp127, Glu131, Asn154, Asp156, Asp158, Asp166, Asp169, Lys171, Asp177, Asp180, Glu354, Asp389, Phe408, Leu411, and Glu412. Cys647 acts as the Nucleophile in catalysis.

The protein belongs to the protein arginine deiminase family. In terms of assembly, homodimer. Ca(2+) serves as cofactor. Spinal cord, submaxillary gland, cerebrum, cerebellum, and skeletal muscle.

It is found in the cytoplasm. It catalyses the reaction L-arginyl-[protein] + H2O = L-citrullyl-[protein] + NH4(+). Catalyzes the deimination of arginine residues of proteins. This chain is Protein-arginine deiminase type-2 (Padi2), found in Rattus norvegicus (Rat).